Consider the following 56-residue polypeptide: Large ribosomal subunit protein bL32 (56 aa).

The segment at 1 to 21 (MAVQKNKPTRSKRGMRRSHDA) is disordered. The segment covering 7–16 (KPTRSKRGMR) has biased composition (basic residues).

Belongs to the bacterial ribosomal protein bL32 family.

In Hamiltonella defensa subsp. Acyrthosiphon pisum (strain 5AT), this protein is Large ribosomal subunit protein bL32.